Reading from the N-terminus, the 679-residue chain is Genome polyprotein (679 aa).

The propeptide at 1 to 14 (SAGMIIMLIPTVMA) is ER anchor for the capsid protein C, removed in mature form by serine protease NS3. The helical transmembrane segment at 2–22 (AGMIIMLIPTVMAFHLTTRNG) threads the bilayer. Residues 23 to 138 (EPHMIVSRQE…GAWKHAQRIE (116 aa)) are Extracellular-facing. N83 carries N-linked (GlcNAc...) asparagine; by host glycosylation. A helical transmembrane segment spans residues 139-159 (IWILRHPGFTIMAAILAYTIG). Topologically, residues 160 to 165 (TTHFQR) are cytoplasmic. A helical transmembrane segment spans residues 166 to 180 (ALIFILLTAVAPSMT). Topologically, residues 181–625 (MRCIGISNRD…LHQVFGAIYG (445 aa)) are extracellular. 4 disulfide bridges follow: C183–C210, C240–C301, C254–C285, and C272–C296. Residue N247 is glycosylated (N-linked (GlcNAc...) asparagine; by host). Residues 278 to 291 (DRGWGNGCGLFGKG) form a fusion peptide region. N-linked (GlcNAc...) asparagine; by host glycosylation occurs at N333. Cystine bridges form between C365–C465 and C482–C513. The helical transmembrane segment at 626–646 (AAFSGVSWTMKILIGVIITWI) threads the bilayer. Residues 647–652 (GMNSRS) lie on the Cytoplasmic side of the membrane. A helical transmembrane segment spans residues 653 to 673 (TSLSVSLVLVGIVTLYLGVMV). Topologically, residues 674–679 (QADSGC) are extracellular.

Forms heterodimers with envelope protein E in the endoplasmic reticulum and Golgi. In terms of assembly, homodimer; in the endoplasmic reticulum and Golgi. Interacts with protein prM. Interacts with non-structural protein 1. In terms of processing, cleaved in post-Golgi vesicles by a host furin, releasing the mature small envelope protein M, and peptide pr. This cleavage is incomplete as up to 30% of viral particles still carry uncleaved prM. Post-translationally, N-glycosylated. N-glycosylated. The excreted form is glycosylated and this is required for efficient secretion of the protein from infected cells. In terms of processing, specific enzymatic cleavages in vivo yield mature proteins. Cleavages in the lumen of endoplasmic reticulum are performed by host signal peptidase, wereas cleavages in the cytoplasmic side are performed by serine protease NS3. Signal cleavage at the 2K-4B site requires a prior NS3 protease-mediated cleavage at the 4A-2K site.

The protein localises to the secreted. The protein resides in the virion membrane. It localises to the host endoplasmic reticulum membrane. Functionally, prevents premature fusion activity of envelope proteins in trans-Golgi by binding to envelope protein E at pH6.0. After virion release in extracellular space, gets dissociated from E dimers. Acts as a chaperone for envelope protein E during intracellular virion assembly by masking and inactivating envelope protein E fusion peptide. prM is the only viral peptide matured by host furin in the trans-Golgi network probably to avoid catastrophic activation of the viral fusion activity in acidic Golgi compartment prior to virion release. prM-E cleavage is inefficient, and many virions are only partially matured. These uncleaved prM would play a role in immune evasion. In terms of biological role, may play a role in virus budding. Exerts cytotoxic effects by activating a mitochondrial apoptotic pathway through M ectodomain. May display a viroporin activity. Its function is as follows. Binds to host cell surface receptor and mediates fusion between viral and cellular membranes. Envelope protein is synthesized in the endoplasmic reticulum in the form of heterodimer with protein prM. They play a role in virion budding in the ER, and the newly formed immature particle is covered with 60 spikes composed of heterodimer between precursor prM and envelope protein E. The virion is transported to the Golgi apparatus where the low pH causes dissociation of PrM-E heterodimers and formation of E homodimers. prM-E cleavage is inefficient, and many virions are only partially matured. These uncleaved prM would play a role in immune evasion. Functionally, involved in immune evasion, pathogenesis and viral replication. Once cleaved off the polyprotein, is targeted to three destinations: the viral replication cycle, the plasma membrane and the extracellular compartment. Essential for viral replication. Required for formation of the replication complex and recruitment of other non-structural proteins to the ER-derived membrane structures. Excreted as a hexameric lipoparticle that plays a role against host immune response. Antagonizing the complement function. Binds to the host macrophages and dendritic cells. Inhibits signal transduction originating from Toll-like receptor 3 (TLR3). Disrupts the host endothelial glycocalyx layer of host pulmonary microvascular endothelial cells, inducing degradation of sialic acid and shedding of heparan sulfate proteoglycans. NS1 induces expression of sialidases, heparanase, and activates cathepsin L, which activates heparanase via enzymatic cleavage. These effects are probably linked to the endothelial hyperpermeability observed in severe dengue disease. In Dengue virus type 2 (strain Thailand/PUO-218/1980) (DENV-2), this protein is Genome polyprotein.